The sequence spans 391 residues: Galactarate dehydratase (D-threo-forming) (391 aa).

Arg15 contacts substrate. Positions 42 and 45 each coordinate Mg(2+). Substrate is bound at residue Tyr89. Residue Tyr90 is the Proton donor of the active site. The active-site Proton acceptor is Tyr164. Mg(2+)-binding residues include Asp193, Glu221, and His246. Thr296 lines the substrate pocket. A Mg(2+)-binding site is contributed by Thr297. Arg385 contributes to the substrate binding site.

The protein belongs to the mandelate racemase/muconate lactonizing enzyme family. Mg(2+) serves as cofactor.

The catalysed reaction is galactarate = (2S,3R)-dihydroxy-5-oxohexanedioate + H2O. In terms of biological role, catalyzes the regioselective dehydration of galactarate into 2-keto-D-threo-4,5-dihydroxyadipate ((2S,3R)-dihydroxy-5-oxohexanedioate). Is not active on other acid sugars. The sequence is that of Galactarate dehydratase (D-threo-forming) from Oceanobacillus iheyensis (strain DSM 14371 / CIP 107618 / JCM 11309 / KCTC 3954 / HTE831).